The primary structure comprises 662 residues: Transforming growth factor beta activator LRRC32 (662 aa).

The N-terminal stretch at 1–17 (MRPQILLLLALLTLGLA) is a signal peptide. Residues 18-625 (AQRQDKVPCK…EDCEKGGLKN (608 aa)) lie on the Extracellular side of the membrane. The 28-residue stretch at 21 to 48 (QDKVPCKMVDKKVSCQGLGLLQVPSVLP) folds into the LRRNT domain. 10 LRR repeats span residues 50-73 (DTET…GFYT), 74-95 (ALRH…AFQA), 98-119 (HLEH…SAGG), 125-145 (RVTS…ERLL), 150-171 (SLHT…TFRD), 174-195 (VLEQ…AFEG), 198-219 (RLTH…SLQQ), 220-240 (LRVL…SQPQ), 244-265 (QLTW…AALP), and 266-286 (RLIY…PPQD). N-linked (GlcNAc...) asparagine glycosylation occurs at N203. N271 and N308 each carry an N-linked (GlcNAc...) asparagine glycan. LRR repeat units lie at residues 316–339 (QLLN…EHLT), 340–361 (SLCF…RSGS), 364–385 (CLML…ARAL), 387–408 (SLRT…TFAN), 411–432 (SLQR…DEPG), 444–465 (SLHS…AFLH), 467–488 (PLTE…ALGG), 492–513 (SLEV…LPCF), 515–536 (CLKR…TQAV), and 537–558 (SLEV…AMGG). N-linked (GlcNAc...) asparagine glycosylation is present at N345. An N-linked (GlcNAc...) asparagine glycan is attached at N545. In terms of domain architecture, LRRCT spans 571–620 (NPLSCCGNGWLAAQLHQGRVDVDATQDLICRFSSQEEVSLSHVRPEDCEK). A helical membrane pass occupies residues 626-646 (INLIIILTFILVSAILLTTLA). At 647–662 (TCCCVRRQKFNQQYKA) the chain is on the cytoplasmic side.

It belongs to the LRRC32/LRRC33 family. Interacts with TGFB1; associates via disulfide bonds with the Latency-associated peptide chain (LAP) regulatory chain of TGFB1, leading to regulate activation of TGF-beta-1. Interacts with TGFB2. Interacts with TGFB3; associates via disulfide bonds with the Latency-associated peptide chain (LAP) regulatory chain of TGFB3, leading to regulate activation of TGF-beta-3. Interacts with LAPTM4B; decreases TGFB1 production in regulatory T-cells.

Its subcellular location is the cell membrane. The protein localises to the cell surface. Its function is as follows. Key regulator of transforming growth factor beta (TGFB1, TGFB2 and TGFB3) that controls TGF-beta activation by maintaining it in a latent state during storage in extracellular space. Associates specifically via disulfide bonds with the Latency-associated peptide (LAP), which is the regulatory chain of TGF-beta, and regulates integrin-dependent activation of TGF-beta. Able to outcompete LTBP1 for binding to LAP regulatory chain of TGF-beta. Controls activation of TGF-beta-1 (TGFB1) on the surface of activated regulatory T-cells (Tregs). Required for epithelial fusion during palate development by regulating activation of TGF-beta-3 (TGFB3). The chain is Transforming growth factor beta activator LRRC32 from Pongo abelii (Sumatran orangutan).